Reading from the N-terminus, the 495-residue chain is Transcription termination/antitermination protein NusA (495 aa).

An S1 motif domain is found at 135-200 (GEIITGVVKK…RGAQLFVTRS (66 aa)). In terms of domain architecture, KH spans 302-368 (KHTMDIAVEA…FTKYLDIDED (67 aa)). A run of 2 repeats spans residues 364-414 (DIDE…KNAL) and 439-489 (GVDR…RNIC). The 2 X 51 AA approximate repeats stretch occupies residues 364 to 489 (DIDEDFATVL…ALIMAARNIC (126 aa)).

It belongs to the NusA family. In terms of assembly, monomer. Binds directly to the core enzyme of the DNA-dependent RNA polymerase and to nascent RNA.

It is found in the cytoplasm. Participates in both transcription termination and antitermination. The sequence is that of Transcription termination/antitermination protein NusA from Shigella flexneri.